A 147-amino-acid chain; its full sequence is Putative pre-16S rRNA nuclease (147 aa).

Belongs to the YqgF nuclease family.

The protein localises to the cytoplasm. Its function is as follows. Could be a nuclease involved in processing of the 5'-end of pre-16S rRNA. The protein is Putative pre-16S rRNA nuclease of Polynucleobacter necessarius subsp. necessarius (strain STIR1).